A 224-amino-acid chain; its full sequence is MTLKNKSIVVLLSGGLDSSTVTGIAKKSEAKIFGLSFDYGQRHKKELYSASIIAKHFNIEEFKIIKLDLSLWGGSSLTDTQKNIPLEGVQTNKIPNTYVPGRNTIFISVALSYAEAIDADFIGLGVNALDYSGYPDCRPDYIKKFQELADLANKRGRENNPIKLWTPLLDLNKEEIIKLAYSNHVPLEKTWSCYSGYSKPCGKCDSCRIRNDAYEKWLNNNNKK.

Residue 12–22 (LSGGLDSSTVT) participates in ATP binding. Zn(2+) contacts are provided by Cys193, Cys201, Cys204, and Cys207.

It belongs to the QueC family. Zn(2+) serves as cofactor.

It catalyses the reaction 7-carboxy-7-deazaguanine + NH4(+) + ATP = 7-cyano-7-deazaguanine + ADP + phosphate + H2O + H(+). It participates in purine metabolism; 7-cyano-7-deazaguanine biosynthesis. In terms of biological role, catalyzes the ATP-dependent conversion of 7-carboxy-7-deazaguanine (CDG) to 7-cyano-7-deazaguanine (preQ(0)). The sequence is that of 7-cyano-7-deazaguanine synthase from Prochlorococcus marinus (strain MIT 9215).